The sequence spans 443 residues: uncharacterized protein (443 aa).

The interval 1–21 (MQSVTPPPTQQGKPDPTNSDM) is disordered. Residues 10–20 (QQGKPDPTNSD) show a composition bias toward polar residues.

This is an uncharacterized protein from Caenorhabditis elegans.